Here is a 237-residue protein sequence, read N- to C-terminus: Ribonuclease 3 (237 aa).

The RNase III domain maps to 3–133; that stretch reads SRQPLLDALG…LLGAIYLQHG (131 aa). Glu-43 contacts Mg(2+). Residue Asp-47 is part of the active site. Residues Asp-119 and Glu-122 each contribute to the Mg(2+) site. Glu-122 is a catalytic residue. In terms of domain architecture, DRBM spans 160-228; sequence DWKTSLQELT…AAATWKALDV (69 aa).

The protein belongs to the ribonuclease III family. Homodimer. Requires Mg(2+) as cofactor.

It is found in the cytoplasm. It catalyses the reaction Endonucleolytic cleavage to 5'-phosphomonoester.. Digests double-stranded RNA. Involved in the processing of primary rRNA transcript to yield the immediate precursors to the large and small rRNAs (23S and 16S). Processes some mRNAs, and tRNAs when they are encoded in the rRNA operon. Processes pre-crRNA and tracrRNA of type II CRISPR loci if present in the organism. This Mycolicibacterium paratuberculosis (strain ATCC BAA-968 / K-10) (Mycobacterium paratuberculosis) protein is Ribonuclease 3.